The following is a 130-amino-acid chain: Small ribosomal subunit protein eS17 (130 aa).

Positions 74–84 are enriched in basic and acidic residues; it reads QEEERERRDNY. Residues 74-97 are disordered; that stretch reads QEEERERRDNYMPEISTVDPSQLT.

The protein belongs to the eukaryotic ribosomal protein eS17 family.

The chain is Small ribosomal subunit protein eS17 (rps-17) from Caenorhabditis elegans.